The sequence spans 100 residues: uncharacterized protein (100 aa).

The protein resides in the virion. This is an uncharacterized protein from Acanthamoeba polyphaga mimivirus (APMV).